Here is a 723-residue protein sequence, read N- to C-terminus: Threonine--tRNA ligase 1, cytoplasmic (723 aa).

Positions 1–46 (MFEEKASSPSGKMGGEEKPIGAGEEKQKEGGKKKNKEGSGDGGRAE) are disordered. Residues 14–39 (GGEEKPIGAGEEKQKEGGKKKNKEGS) show a composition bias toward basic and acidic residues. Position 39 is a phosphoserine (S39). In terms of domain architecture, TGS spans 79-143 (DSKPIKVTLP…EEDCTLELLK (65 aa)). K243 is subject to N6-acetyllysine. Position 246 is a phosphothreonine (T246). Phosphotyrosine is present on Y298. T453 carries the post-translational modification Phosphothreonine. A Phosphoserine modification is found at S702.

The protein belongs to the class-II aminoacyl-tRNA synthetase family. In terms of assembly, homodimer. ISGylated.

The protein localises to the cytoplasm. It carries out the reaction tRNA(Thr) + L-threonine + ATP = L-threonyl-tRNA(Thr) + AMP + diphosphate + H(+). Inhibited by borrelidin (BN, IC 50 is 7 nM), which binds to 4 distinct subsites in the protein, preventing binding of all 3 substrates. In terms of biological role, catalyzes the attachment of threonine to tRNA(Thr) in a two-step reaction: threonine is first activated by ATP to form Thr-AMP and then transferred to the acceptor end of tRNA(Thr). Also edits incorrectly charged tRNA(Thr) via its editing domain, at the post-transfer stage. The sequence is that of Threonine--tRNA ligase 1, cytoplasmic from Homo sapiens (Human).